A 270-amino-acid chain; its full sequence is Hydroxyethylthiazole kinase (270 aa).

Residue M47 participates in substrate binding. ATP-binding residues include R123 and T169. G196 contacts substrate.

It belongs to the Thz kinase family. Requires Mg(2+) as cofactor.

It catalyses the reaction 5-(2-hydroxyethyl)-4-methylthiazole + ATP = 4-methyl-5-(2-phosphooxyethyl)-thiazole + ADP + H(+). Its pathway is cofactor biosynthesis; thiamine diphosphate biosynthesis; 4-methyl-5-(2-phosphoethyl)-thiazole from 5-(2-hydroxyethyl)-4-methylthiazole: step 1/1. Catalyzes the phosphorylation of the hydroxyl group of 4-methyl-5-beta-hydroxyethylthiazole (THZ). In Roseiflexus castenholzii (strain DSM 13941 / HLO8), this protein is Hydroxyethylthiazole kinase.